The following is a 149-amino-acid chain: Putative pre-16S rRNA nuclease (149 aa).

This sequence belongs to the YqgF nuclease family.

The protein localises to the cytoplasm. Functionally, could be a nuclease involved in processing of the 5'-end of pre-16S rRNA. The polypeptide is Putative pre-16S rRNA nuclease (Burkholderia multivorans (strain ATCC 17616 / 249)).